A 705-amino-acid polypeptide reads, in one-letter code: Tyrosine decarboxylase (705 aa).

Over residues Arg22–Pro32 the composition is skewed to polar residues. Positions Arg22–Glu81 are disordered. The span at Ser33 to Thr55 shows a compositional bias: low complexity. N6-(pyridoxal phosphate)lysine is present on Lys380. Residues Val554–Lys620 adopt a coiled-coil conformation. Polar residues predominate over residues His667 to Pro678. The segment at His667–Asp687 is disordered.

The protein belongs to the group II decarboxylase family. Requires pyridoxal 5'-phosphate as cofactor. As to expression, expressed in the gonadal sheath projections in between the oocytes, in head RIM motor neurons and RIC interneurons.

Its subcellular location is the cytoplasm. The protein localises to the cell projection. It localises to the axon. The protein resides in the perikaryon. It catalyses the reaction L-tyrosine + H(+) = tyramine + CO2. Functionally, required for the decarboxylation of tyrosine to tyramine, a precursor of octopamine but probably also itself a neurotransmitter. Involved in the regulation of egg laying, which is inhibited by tyramine. Also involved in controlling locomotion and head movements. Due to its involvement in octopamine biosynthesis, also required for crtc-1-dependent regulation of AMPK-mediated longevity which requires octopamine signaling. The sequence is that of Tyrosine decarboxylase from Caenorhabditis elegans.